Reading from the N-terminus, the 198-residue chain is Na(+)-translocating NADH-quinone reductase subunit E (198 aa).

A run of 6 helical transmembrane segments spans residues 11-31 (SVFIENMALSFFLGMCTFLAV), 35-55 (VSTAFGLGIAVIVVLGIAVPV), 77-97 (FLNFITFIGVIAALVQILEMI), 110-130 (GIFLPLITVNCAIFGGVSFMV), 140-160 (VVYGIGAGTGWMLAIVALAGL), and 176-196 (LGITFITVGLMALGFMSFSGI).

This sequence belongs to the NqrDE/RnfAE family. In terms of assembly, composed of six subunits; NqrA, NqrB, NqrC, NqrD, NqrE and NqrF.

Its subcellular location is the cell inner membrane. The enzyme catalyses a ubiquinone + n Na(+)(in) + NADH + H(+) = a ubiquinol + n Na(+)(out) + NAD(+). Its function is as follows. NQR complex catalyzes the reduction of ubiquinone-1 to ubiquinol by two successive reactions, coupled with the transport of Na(+) ions from the cytoplasm to the periplasm. NqrA to NqrE are probably involved in the second step, the conversion of ubisemiquinone to ubiquinol. The protein is Na(+)-translocating NADH-quinone reductase subunit E of Haemophilus ducreyi (strain 35000HP / ATCC 700724).